The sequence spans 43 residues: Bacteriocin mundticin (43 aa).

Cys-9 and Cys-14 form a disulfide bridge.

Its function is as follows. This bacteriocin inhibits the growth of several Gram-positive bacteria, especially pathogenic L.monocytogenes and C.botulinum but has no effect on the growth of a number of yeasts and Gram-negative bacteria. This chain is Bacteriocin mundticin, found in Enterococcus mundtii.